We begin with the raw amino-acid sequence, 65 residues long: Large ribosomal subunit protein bL35 (65 aa).

Belongs to the bacterial ribosomal protein bL35 family.

The protein is Large ribosomal subunit protein bL35 of Thiobacillus denitrificans (strain ATCC 25259 / T1).